The sequence spans 442 residues: Syndecan-3 (442 aa).

Disordered stretches follow at residues 1–24 (MKPG…AAAG) and 57–87 (RPVD…SGYF). The Extracellular portion of the chain corresponds to 1-387 (MKPGPPHRAG…SILERKEVLV (387 aa)). The span at 13-24 (HGAGAGAGAAAG) shows a compositional bias: gly residues. Residues 63 to 77 (GSGDDDSFPDDELDD) show a composition bias toward acidic residues. O-linked (Xyl...) (glycosaminoglycan) serine glycosylation is found at S80, S82, S84, and S91. S108 carries O-linked (GalNAc) serine; by GALNT13 glycosylation. O-linked (GalNAc) threonine; by GALNT13 glycosylation is found at T109 and T110. Disordered regions lie at residues 150–173 (EEPS…STGD), 225–326 (TTPE…ETTQ), and 340–367 (AAKA…AIDS). Composition is skewed to low complexity over residues 156-173 (ATTV…STGD), 225-238 (TTPE…TAAV), and 275-286 (TLPLGTTAPGPT). S160 carries O-linked (GalNAc) serine; by GALNT13 glycosylation. 3 O-linked (GalNAc) threonine; by GALNT13 glycosylation sites follow: T161, T162, and T169. An O-linked (GalNAc) serine; by GALNT13 glycan is attached at S170. An O-linked (GalNAc) threonine; by GALNT13 glycan is attached at T171. Residues 288 to 299 (VAQTPTPETFLT) are compositionally biased toward polar residues. S314 and S367 each carry an O-linked (Xyl...) (glycosaminoglycan) serine glycan. A helical transmembrane segment spans residues 388-408 (AVIVGGVVGALFAAFLVTLLI). Phosphotyrosine occurs at positions 409, 419, 431, and 441. At 409–442 (YRMKKKDEGSYTLEEPKQASVTYQKPDKQEEFYA) the chain is on the cytoplasmic side. A disordered region spans residues 419–442 (YTLEEPKQASVTYQKPDKQEEFYA). Residues 433–442 (KPDKQEEFYA) are compositionally biased toward basic and acidic residues.

It belongs to the syndecan proteoglycan family. In terms of assembly, interacts with TIAM1. Interacts with PTN (via heparan sulfate chains); this interaction mediates the neurite outgrowth-promoting signal from PTN to the cytoskeleton of growing neurites; this interaction mediates osteoblast recruitment. Interacts with MDK; this interaction induces SDC3 clustering; this interaction induces neuronal cell adhesion and neurite outgrowth. In terms of processing, O-glycosylated within the Thr/Ser-rich region which could interact with lectin domains on other molecules. Expressed in the nervous system, the adrenal gland, and the spleen.

The protein localises to the cell membrane. Its function is as follows. Cell surface proteoglycan that may bear heparan sulfate. May have a role in the organization of cell shape by affecting the actin cytoskeleton, possibly by transferring signals from the cell surface in a sugar-dependent mechanism. The polypeptide is Syndecan-3 (SDC3) (Homo sapiens (Human)).